The chain runs to 159 residues: Fimbrial protein EcpB (159 aa).

Positions 1 to 6 (MYKQKG) are cleaved as a propeptide — leader sequence. N-methylphenylalanine is present on phenylalanine 7. A helical transmembrane segment spans residues 7-29 (FTLIELMIVIAIIGILAAIALPL). Cysteines 137 and 156 form a disulfide.

The protein belongs to the N-Me-Phe pilin family.

It is found in the fimbrium. Its subcellular location is the membrane. This chain is Fimbrial protein EcpB (ecpB), found in Eikenella corrodens.